We begin with the raw amino-acid sequence, 207 residues long: Protein GrpE (207 aa).

Positions 1-33 are disordered; sequence MTDPNGPKDIPEQSAEAAEPVVSKPYIMPDDPE.

The protein belongs to the GrpE family. Homodimer.

It is found in the cytoplasm. Participates actively in the response to hyperosmotic and heat shock by preventing the aggregation of stress-denatured proteins, in association with DnaK and GrpE. It is the nucleotide exchange factor for DnaK and may function as a thermosensor. Unfolded proteins bind initially to DnaJ; upon interaction with the DnaJ-bound protein, DnaK hydrolyzes its bound ATP, resulting in the formation of a stable complex. GrpE releases ADP from DnaK; ATP binding to DnaK triggers the release of the substrate protein, thus completing the reaction cycle. Several rounds of ATP-dependent interactions between DnaJ, DnaK and GrpE are required for fully efficient folding. This Rhodopseudomonas palustris (strain BisA53) protein is Protein GrpE.